Consider the following 882-residue polypeptide: HTH-type transcriptional regulator AlkS (882 aa).

ATP is bound at residue 51 to 58 (APPGYGKT). One can recognise an HTH luxR-type domain in the interval 815 to 880 (ENKADALLTR…QATIEAERQG (66 aa)). The H-T-H motif DNA-binding region spans 839–858 (NKQIATNMHVTEDAIKWHMR).

Its pathway is hydrocarbon metabolism; alkane degradation. Functionally, this protein activates the expression of alkBFGHJKL operon in the presence of alkanes. The sequence is that of HTH-type transcriptional regulator AlkS (alkS) from Ectopseudomonas oleovorans (Pseudomonas oleovorans).